A 562-amino-acid polypeptide reads, in one-letter code: Arginine--tRNA ligase (562 aa).

The 'HIGH' region motif lies at 129–139 (ANPTGPLHVGH).

The protein belongs to the class-I aminoacyl-tRNA synthetase family. As to quaternary structure, monomer.

It is found in the cytoplasm. It catalyses the reaction tRNA(Arg) + L-arginine + ATP = L-arginyl-tRNA(Arg) + AMP + diphosphate. This chain is Arginine--tRNA ligase, found in Xanthomonas oryzae pv. oryzae (strain MAFF 311018).